We begin with the raw amino-acid sequence, 3630 residues long: Trimeric autotransporter adhesin AtaA (3630 aa).

The signal sequence occupies residues 1 to 23 (MNKIYKVIWNATLLAWVAVSELA). The tract at residues 24 to 3487 (KGKTKSTTSK…TNQAVVNYLG (3464 aa)) is surface exposed passenger domain. An N-terminal YadA-like head region spans residues 108-315 (SIAIGENAQG…ASDAVTVAQL (208 aa)). The interval 316-2904 (DKAYDDTNGR…GRAATEEQLK (2589 aa)) is N-terminal stalk. The interval 2905-3169 (AVITSNITEV…DSDAVNVAQL (265 aa)) is C-terminal YadA-like head. The segment at 3170–3561 (KAVGNQVVTT…DVEKKANAGI (392 aa)) is C-terminal stalk. The tract at residues 3539–3574 (LDNAFRITNNRIDDVEKKANAGIAAAMALESAPYVP) is outer membrane translocation of the passenger domain. 4 beta stranded membrane-spanning segments follow: residues 3575 to 3585 (GKYTYAAGAAY), 3589 to 3599 (ENAVGVTLRKT), 3608 to 3614 (TGGVAAA), and 3618 to 3629 (DASVRIGISGVI). Residues 3575–3630 (GKYTYAAGAAYHGGENAVGVTLRKTADNGRWSITGGVAAASQGDASVRIGISGVID) form a translocator domain region.

This sequence belongs to the autotransporter-2 (AT-2) (TC 1.B.40) family. As to quaternary structure, homotrimer. Interacts with TpgA.

Its subcellular location is the cell surface. The protein localises to the cell outer membrane. Responsible for autoagglutination, and for adhesion to abiotic and biotic surfaces such as polystyrene (PS), type I collagen, polypropylene (PP), polyvinylchloride (PVC), glass and stainless steel (SS). Adhesion is much stronger than that mediated by Yersinia YadA in a comparative assay. Confers autoagglutination and binding to PS, type I collagen, PP, PVC, glass and SS upon expression in Acinetobacter baylyi strain ADP1. Involved in rapid, irreversible adherence to polyurethane. Forms an unusual biofilm. An extended, surface exposed fiber binds to quartz crystals, PS and glass. It can be removed by washing in distilled water. The polypeptide is Trimeric autotransporter adhesin AtaA (Acinetobacter sp. (strain Tol 5)).